A 105-amino-acid chain; its full sequence is U1-sicaritoxin-Li1b (105 aa).

An N-terminal signal peptide occupies residues 1 to 19; sequence MKLLFEGLLVLVLIAFVVA. Positions 20-36 are excised as a propeptide; it reads EFESDAEKWEALITQER. 4 disulfides stabilise this stretch: Cys38–Cys55, Cys46–Cys60, Cys54–Cys73, and Cys62–Cys71. Residue Arg82 is modified to Arginine amide. Residues 86–105 constitute a propeptide that is removed on maturation; it reads ALMVDPETHRMLSLHRLSEE.

It belongs to the neurotoxin 28 (Litx) family. In terms of tissue distribution, expressed by the venom gland.

It localises to the secreted. Toxin active against insects (S.frugiperda larvae). May act on sodium (Nav) or calcium (Cav) channels. The chain is U1-sicaritoxin-Li1b from Loxosceles intermedia (Brown spider).